The sequence spans 92 residues: C-C motif chemokine 22 (92 aa).

The N-terminal stretch at 1 to 24 (MATLRVPLLVALVLLAVAIQTSDA) is a signal peptide. Disulfide bonds link Cys-36-Cys-60 and Cys-37-Cys-76.

This sequence belongs to the intercrine beta (chemokine CC) family. Expressed by activated splenic B-lymphocytes and dendritic cells. Low expression in lung, thymocytes, lymph node, and unstimulated splenic cells.

It localises to the secreted. In terms of biological role, chemotactic for activated T-lymphocytes. May play an important role in the collaboration of dendritic cells and B-lymphocytes with T-cells in immune responses. In Mus musculus (Mouse), this protein is C-C motif chemokine 22 (Ccl22).